The chain runs to 221 residues: GTP cyclohydrolase III (221 aa).

The protein belongs to the archaeal-type GTP cyclohydrolase family.

The catalysed reaction is GTP + 3 H2O = 2-amino-5-formylamino-6-(5-phospho-D-ribosylamino)pyrimidin-4(3H)-one + 2 phosphate + 2 H(+). Its function is as follows. Catalyzes the formation of 2-amino-5-formylamino-6-ribofuranosylamino-4(3H)-pyrimidinone ribonucleotide monophosphate and inorganic phosphate from GTP. Also has an independent pyrophosphate phosphohydrolase activity. This is GTP cyclohydrolase III from Pyrobaculum calidifontis (strain DSM 21063 / JCM 11548 / VA1).